The primary structure comprises 195 residues: Probable nicotinate-nucleotide adenylyltransferase (195 aa).

Belongs to the NadD family.

It carries out the reaction nicotinate beta-D-ribonucleotide + ATP + H(+) = deamido-NAD(+) + diphosphate. The protein operates within cofactor biosynthesis; NAD(+) biosynthesis; deamido-NAD(+) from nicotinate D-ribonucleotide: step 1/1. In terms of biological role, catalyzes the reversible adenylation of nicotinate mononucleotide (NaMN) to nicotinic acid adenine dinucleotide (NaAD). In Bordetella petrii (strain ATCC BAA-461 / DSM 12804 / CCUG 43448), this protein is Probable nicotinate-nucleotide adenylyltransferase.